Here is a 107-residue protein sequence, read N- to C-terminus: Nucleoid-associated protein RC1337 (107 aa).

Belongs to the YbaB/EbfC family. As to quaternary structure, homodimer.

The protein resides in the cytoplasm. Its subcellular location is the nucleoid. Functionally, binds to DNA and alters its conformation. May be involved in regulation of gene expression, nucleoid organization and DNA protection. This Rickettsia conorii (strain ATCC VR-613 / Malish 7) protein is Nucleoid-associated protein RC1337.